The sequence spans 27 residues: Fructokinase (27 aa).

The protein belongs to the ROK (NagC/XylR) family. Homodimer. It depends on Mg(2+) as a cofactor.

The enzyme catalyses D-fructose + ATP = D-fructose 6-phosphate + ADP + H(+). Inhibition by zinc ions. This chain is Fructokinase, found in Fusobacterium mortiferum.